We begin with the raw amino-acid sequence, 214 residues long: Pyridoxine/pyridoxamine 5'-phosphate oxidase (214 aa).

Substrate-binding positions include 8–11 (RINY) and Lys66. Residues 61-66 (RIVLIK), 76-77 (FT), Arg82, Lys83, and Gln105 each bind FMN. Substrate contacts are provided by Tyr123, Arg127, and Ser131. Residues 140–141 (QS) and Trp184 contribute to the FMN site. 190–192 (RLH) provides a ligand contact to substrate. Arg194 contributes to the FMN binding site.

The protein belongs to the pyridoxamine 5'-phosphate oxidase family. As to quaternary structure, homodimer. Requires FMN as cofactor.

It catalyses the reaction pyridoxamine 5'-phosphate + O2 + H2O = pyridoxal 5'-phosphate + H2O2 + NH4(+). The catalysed reaction is pyridoxine 5'-phosphate + O2 = pyridoxal 5'-phosphate + H2O2. It functions in the pathway cofactor metabolism; pyridoxal 5'-phosphate salvage; pyridoxal 5'-phosphate from pyridoxamine 5'-phosphate: step 1/1. Its pathway is cofactor metabolism; pyridoxal 5'-phosphate salvage; pyridoxal 5'-phosphate from pyridoxine 5'-phosphate: step 1/1. Its function is as follows. Catalyzes the oxidation of either pyridoxine 5'-phosphate (PNP) or pyridoxamine 5'-phosphate (PMP) into pyridoxal 5'-phosphate (PLP). This is Pyridoxine/pyridoxamine 5'-phosphate oxidase from Burkholderia cenocepacia (strain HI2424).